A 374-amino-acid chain; its full sequence is Phospho-N-acetylmuramoyl-pentapeptide-transferase (374 aa).

The next 10 membrane-spanning stretches (helical) occupy residues 3–23, 52–72, 85–105, 125–145, 170–190, 201–221, 244–264, 271–291, 294–314, and 350–370; these read AVIVAVGVAFLVSLFCTPIAI, MGGVVFILATVIAYVAGHLAL, PTITALVLLGLMVFSGAVGFI, LLGQILVGAVFGVIALYFPST, IPALELTKVGAVVLFIFVVMA, LDGLATGASVMVLAAYALIAF, PLEIALIAGAAAGACVGFLWW, IFMGDTGALGLGGLIAGMAMS, TILLLPIIGGLFVIITMSVVI, and FWIIAGIGVAIALGLFYSEFL.

The protein belongs to the glycosyltransferase 4 family. MraY subfamily. It depends on Mg(2+) as a cofactor.

It localises to the cell membrane. It catalyses the reaction UDP-N-acetyl-alpha-D-muramoyl-L-alanyl-gamma-D-glutamyl-meso-2,6-diaminopimeloyl-D-alanyl-D-alanine + di-trans,octa-cis-undecaprenyl phosphate = di-trans,octa-cis-undecaprenyl diphospho-N-acetyl-alpha-D-muramoyl-L-alanyl-D-glutamyl-meso-2,6-diaminopimeloyl-D-alanyl-D-alanine + UMP. The protein operates within cell wall biogenesis; peptidoglycan biosynthesis. Catalyzes the initial step of the lipid cycle reactions in the biosynthesis of the cell wall peptidoglycan: transfers peptidoglycan precursor phospho-MurNAc-pentapeptide from UDP-MurNAc-pentapeptide onto the lipid carrier undecaprenyl phosphate, yielding undecaprenyl-pyrophosphoryl-MurNAc-pentapeptide, known as lipid I. The sequence is that of Phospho-N-acetylmuramoyl-pentapeptide-transferase from Salinispora arenicola (strain CNS-205).